The chain runs to 290 residues: MGLCKCPKRQVTTQFCFEHRVNVCENCMVVNHTKCTVQSYIQWLKDSDFDSSCPLCGSPLDNEDCVRLICYHVFHWKCLNAKQQSLPANTAPGGHTCPTCSDPIFPPVNLVSPVADVLRTRLGQVNWARNVLELPLLSEDKPDYYTTATTSAGVHNGNTFASSMSQTRSNERPESPHSIVNMESYVSNASPALDFHASSRRPLLARESPIGASDRDDNKYKRRTPQEIFSRWSRRLYAPSSKPPWRRTWFLVLGGCIGFVCIIYVLATLGRRGGDGEVGLIYNRNLPHEE.

The B box-type; degenerate zinc finger occupies 1–43 (MGLCKCPKRQVTTQFCFEHRVNVCENCMVVNHTKCTVQSYIQW). An RING-type; atypical zinc finger spans residues 53–101 (CPLCGSPLDNEDCVRLICYHVFHWKCLNAKQQSLPANTAPGGHTCPTCS). Polar residues predominate over residues 156 to 168 (NGNTFASSMSQTR). Residues 156–175 (NGNTFASSMSQTRSNERPES) form a disordered region. Residues 249 to 269 (WFLVLGGCIGFVCIIYVLATL) traverse the membrane as a helical segment.

The protein belongs to the ZFPL1 family.

It is found in the membrane. The polypeptide is Zinc finger protein-like 1 homolog (Aedes aegypti (Yellowfever mosquito)).